A 465-amino-acid chain; its full sequence is Probable tRNA modification GTPase MnmE (465 aa).

R23, E85, and R124 together coordinate (6S)-5-formyl-5,6,7,8-tetrahydrofolate. Residues 221-384 (GTKVCIIGKP…LNNCILDLSS (164 aa)) enclose the TrmE-type G domain. GTP contacts are provided by residues 231–236 (NVGKSS), 250–256 (TNFPGTT), and 275–278 (DTAG). The Mg(2+) site is built by S235 and T256. Residue K465 participates in (6S)-5-formyl-5,6,7,8-tetrahydrofolate binding.

It belongs to the TRAFAC class TrmE-Era-EngA-EngB-Septin-like GTPase superfamily. TrmE GTPase family. K(+) serves as cofactor.

The protein localises to the plastid. It localises to the chloroplast. Exhibits a very high intrinsic GTPase hydrolysis rate. Involved in the addition of a carboxymethylaminomethyl (cmnm) group at the wobble position (U34) of certain tRNAs, forming tRNA-cmnm(5)s(2)U34. The polypeptide is Probable tRNA modification GTPase MnmE (Cyanidium caldarium (Red alga)).